Reading from the N-terminus, the 334-residue chain is 7,8-didemethyl-8-hydroxy-5-deazariboflavin synthase (334 aa).

In terms of domain architecture, Radical SAM core spans V2–N248. Residues C16, C20, and C23 each contribute to the [4Fe-4S] cluster site.

The protein belongs to the radical SAM superfamily. CofG family. In terms of assembly, consists of two subunits, CofG and CofH. The cofactor is [4Fe-4S] cluster.

It carries out the reaction 5-amino-5-(4-hydroxybenzyl)-6-(D-ribitylimino)-5,6-dihydrouracil + S-adenosyl-L-methionine = 7,8-didemethyl-8-hydroxy-5-deazariboflavin + 5'-deoxyadenosine + L-methionine + NH4(+) + H(+). It participates in cofactor biosynthesis; coenzyme F0 biosynthesis. Functionally, catalyzes the radical-mediated synthesis of 7,8-didemethyl-8-hydroxy-5-deazariboflavin from 5-amino-5-(4-hydroxybenzyl)-6-(D-ribitylimino)-5,6-dihydrouracil. The protein is 7,8-didemethyl-8-hydroxy-5-deazariboflavin synthase of Methanopyrus kandleri (strain AV19 / DSM 6324 / JCM 9639 / NBRC 100938).